A 369-amino-acid chain; its full sequence is Ribosome-interacting GTPase 1 (369 aa).

Ser-2 bears the N-acetylserine mark. The region spanning 66 to 292 is the OBG-type G domain; sequence ASVGFVGFPS…LLQVMWDRLN (227 aa). GTP contacts are provided by residues 72 to 79, 118 to 122, and 250 to 253; these read GFPSVGKS, DLPGI, and NKID. Residues 292 to 368 enclose the TGS domain; it reads NLVRIYTKPK…EDEDVVTILK (77 aa).

This sequence belongs to the TRAFAC class OBG-HflX-like GTPase superfamily. OBG GTPase family. As to quaternary structure, associates with translating polyribosomes. Interacts with GIR2, TMA46, YAP1 and YGR250C.

Its subcellular location is the cytoplasm. Its function is as follows. Involved in ribosomal function. This is Ribosome-interacting GTPase 1 (RBG1) from Saccharomyces cerevisiae (strain ATCC 204508 / S288c) (Baker's yeast).